Here is a 221-residue protein sequence, read N- to C-terminus: Small ribosomal subunit protein uS2c (221 aa).

It belongs to the universal ribosomal protein uS2 family.

It is found in the plastid. It localises to the chloroplast. This Cyanidioschyzon merolae (strain NIES-3377 / 10D) (Unicellular red alga) protein is Small ribosomal subunit protein uS2c (rps2).